A 185-amino-acid polypeptide reads, in one-letter code: uncharacterized protein (185 aa).

Residues 1–56 constitute a chloroplast transit peptide; sequence MSSFTIPSPSSFSLSNSYNQTSPHSFTLRNSRSNFEFHRLRLDVESRRRSTSLRSN. Positions 48-67 are disordered; it reads RRSTSLRSNCSTKGTDSGEN. Residues 52–64 show a composition bias toward polar residues; sequence SLRSNCSTKGTDS. Residues 105 to 138 adopt a coiled-coil conformation; sequence QAEQQKQVQEIQEEVLERAKKAKERAARETMEEQ.

Its subcellular location is the plastid. The protein localises to the chloroplast. It localises to the plastoglobule. This is an uncharacterized protein from Arabidopsis thaliana (Mouse-ear cress).